The primary structure comprises 198 residues: Phosphoheptose isomerase (198 aa).

One can recognise an SIS domain in the interval 40–198 (IVTALRSGRK…IEAALMQDLS (159 aa)). 55–57 (NGG) serves as a coordination point for substrate. H64 and E68 together coordinate Zn(2+). Substrate contacts are provided by residues E68, 97–98 (ND), 123–125 (STS), S128, and Q175. The Zn(2+) site is built by Q175 and H183.

The protein belongs to the SIS family. GmhA subfamily. As to quaternary structure, homotetramer. Requires Zn(2+) as cofactor.

The protein resides in the cytoplasm. The catalysed reaction is 2 D-sedoheptulose 7-phosphate = D-glycero-alpha-D-manno-heptose 7-phosphate + D-glycero-beta-D-manno-heptose 7-phosphate. It functions in the pathway carbohydrate biosynthesis; D-glycero-D-manno-heptose 7-phosphate biosynthesis; D-glycero-alpha-D-manno-heptose 7-phosphate and D-glycero-beta-D-manno-heptose 7-phosphate from sedoheptulose 7-phosphate: step 1/1. In terms of biological role, catalyzes the isomerization of sedoheptulose 7-phosphate in D-glycero-D-manno-heptose 7-phosphate. This chain is Phosphoheptose isomerase, found in Bradyrhizobium sp. (strain BTAi1 / ATCC BAA-1182).